Consider the following 155-residue polypeptide: Ribosomal RNA large subunit methyltransferase H (155 aa).

S-adenosyl-L-methionine contacts are provided by residues Leu-72, Gly-104, and 123-128 (LAKITL).

This sequence belongs to the RNA methyltransferase RlmH family. As to quaternary structure, homodimer.

It localises to the cytoplasm. The catalysed reaction is pseudouridine(1915) in 23S rRNA + S-adenosyl-L-methionine = N(3)-methylpseudouridine(1915) in 23S rRNA + S-adenosyl-L-homocysteine + H(+). Specifically methylates the pseudouridine at position 1915 (m3Psi1915) in 23S rRNA. This chain is Ribosomal RNA large subunit methyltransferase H, found in Mycoplasma mycoides subsp. mycoides SC (strain CCUG 32753 / NCTC 10114 / PG1).